Reading from the N-terminus, the 300-residue chain is Ubiquitin carboxyl-terminal hydrolase 2 (300 aa).

A UCH catalytic domain is found at 2-220 (SWTTIESDAG…IRFNLMVICK (219 aa)). Residue Cys83 is the Nucleophile of the active site. The Proton donor role is filled by His159. The ULD domain occupies 261-290 (NFVGLFVELSKLLVKDRIDKNTWNSTLETA).

The protein belongs to the peptidase C12 family. Component of the 26S proteasome. Interacts with rpn10.

It localises to the nucleus. It carries out the reaction Thiol-dependent hydrolysis of ester, thioester, amide, peptide and isopeptide bonds formed by the C-terminal Gly of ubiquitin (a 76-residue protein attached to proteins as an intracellular targeting signal).. Ubiquitin-protein hydrolase is involved both in the processing of ubiquitin precursors and of ubiquitinated proteins. This enzyme is a thiol protease that recognizes and hydrolyzes a peptide bond at the C-terminal glycine of ubiquitin. This Schizosaccharomyces pombe (strain 972 / ATCC 24843) (Fission yeast) protein is Ubiquitin carboxyl-terminal hydrolase 2 (uch2).